The primary structure comprises 496 residues: Putative (R)-citramalate synthase CimA (496 aa).

One can recognise a Pyruvate carboxyltransferase domain in the interval 3–253; sequence VRVLDTTLRD…DTSINIEMLY (251 aa).

The protein belongs to the alpha-IPM synthase/homocitrate synthase family. Homodimer.

It catalyses the reaction pyruvate + acetyl-CoA + H2O = (3R)-citramalate + CoA + H(+). It participates in amino-acid biosynthesis; L-isoleucine biosynthesis; 2-oxobutanoate from pyruvate: step 1/3. Its function is as follows. Catalyzes the condensation of pyruvate and acetyl-coenzyme A to form (R)-citramalate. The sequence is that of Putative (R)-citramalate synthase CimA from Methanothermobacter thermautotrophicus (strain ATCC 29096 / DSM 1053 / JCM 10044 / NBRC 100330 / Delta H) (Methanobacterium thermoautotrophicum).